Consider the following 179-residue polypeptide: Chymotrypsin inhibitor ECI (179 aa).

The residue at position 1 (Gln1) is a Pyrrolidone carboxylic acid. Intrachain disulfides connect Cys40–Cys84 and Cys134–Cys143.

It belongs to the protease inhibitor I3 (leguminous Kunitz-type inhibitor) family.

Functionally, inhibition of chymotrypsin. The polypeptide is Chymotrypsin inhibitor ECI (Erythrina variegata (Indian coral tree)).